We begin with the raw amino-acid sequence, 476 residues long: Homeobox protein invected (476 aa).

Disordered stretches follow at residues 1 to 43, 273 to 331, and 347 to 381; these read MAAV…SEDI, KTRY…TSGD, and DRPS…AFSG. The span at 23–32 shows a compositional bias: polar residues; sequence SPNTRDTTSP. Basic and acidic residues-rich tracts occupy residues 33–43 and 292–305; these read ECHDDEKSEDI and KLDE…KTPD. The span at 318-331 shows a compositional bias: low complexity; that stretch reads GSNSGSTSGATSGD. Positions 372–431 form a DNA-binding region, homeobox; that stretch reads EKRPRTAFSGPQLARLKHEFAENRYLTERRRQSLAAELGLAEAQIKIWFQNKRAKIKKAS.

This sequence belongs to the engrailed homeobox family. In terms of tissue distribution, expressed in the middle silk gland but not in the posterior silk gland during the fourth molt/fifth intermolt period.

The protein localises to the nucleus. Functionally, this protein might be involved in the compartmentalization of the silk gland. The chain is Homeobox protein invected (INV) from Bombyx mori (Silk moth).